The sequence spans 110 residues: Thioredoxin Asp f 29 (110 aa).

Residues methionine 1–alanine 110 form the Thioredoxin domain. Catalysis depends on nucleophile residues cysteine 34 and cysteine 37. The cysteines at positions 34 and 37 are disulfide-linked.

This sequence belongs to the thioredoxin family.

Participates in various redox reactions through the reversible oxidation of its active center dithiol to a disulfide and catalyzes dithiol-disulfide exchange reactions. This is Thioredoxin Asp f 29 from Aspergillus fumigatus (Neosartorya fumigata).